A 448-amino-acid polypeptide reads, in one-letter code: O-Mevalon transferase yanI (448 aa).

An N-linked (GlcNAc...) asparagine glycan is attached at asparagine 2. A run of 8 helical transmembrane segments spans residues 21-41 (VLLSHSLASTHYTVLAFLLAV), 54-74 (YGLLLLQITCALQAFVAPPPP), 79-96 (AVLYTSGVLMANLLARYF), 165-185 (FVTAQLLTIIAMYAGLYLVEV), 217-237 (LIVLGLALVVYSHFALFVLPL), 316-336 (MLMLITFVISGLIHTSGSYHV), 350-370 (VKYFISQAISIMIEDFGCWLL), and 390-410 (IVTAGWYFWSRVHWSVMPVAL).

Belongs to the wax synthase family.

The protein resides in the membrane. The protein operates within secondary metabolite biosynthesis; terpenoid biosynthesis. Functionally, O-Mevalon transferase yanI; part of the gene cluster that mediates the biosynthesis of yanuthone D, a fungal isoprenoid epoxycyclohexenone that acts as an antibiotic against fungi and bacteria. The first step of the pathway is the synthesis of 6-methylsalicylic acid (6-MSA) by the polyketide synthase yanA. 6-MSA is then converted to m-cresol by the decarboxylase yanB. The cytochrome P450 monooxygenase yanC then catalyzes the oxidation of m-cresol to toluquinol. Epoxidation of toluquinol is then performed by the short chain dehydrogenase yanD, with the help of yanE, and a further prenylation by yanG leads to 7-deacetoxyyanuthone A. The next step is the hydroxylation of C-22 of 7-deacetoxyyanuthone A by the cytochrome P450 monooxygenase yanH to yield 22-deacetylyanuthone A. O-Mevalon transferase yanI then attaches mevalon to the hydroxyl group of 22-deacetylyanuthone A to produce yanuthone E. Finally, the FAD-dependent monooxygenase yanF oxidizes the hydroxyl group at C15 of yanuthone E to form yanuthone D. Furthermore, several branching points in the pathway lead to the production of yanuthones F and G from 7-deacetoxyyanuthone A; yanuthones H and I from 22-deacetylyanuthone A; and yanuthone J from yanuthone E. The chain is O-Mevalon transferase yanI from Aspergillus niger (strain ATCC 1015 / CBS 113.46 / FGSC A1144 / LSHB Ac4 / NCTC 3858a / NRRL 328 / USDA 3528.7).